A 30-amino-acid chain; its full sequence is Dicynthaurin (30 aa).

T30 is subject to Threonine amide.

As to quaternary structure, homodimer.

It is found in the secreted. Functionally, shows antibacterial activity against both Gram-positive and Gram-negative bacteria. Its antimicrobial activity is optimal at NaCl concentrations below 100 mM, suggesting that the antimicrobial actions of this peptide may take place intracellularly rather than extracellularly. Has no activity against the fungus C.albicans. Has modest hemolytic activity. In Halocynthia aurantium (Sea peach), this protein is Dicynthaurin.